We begin with the raw amino-acid sequence, 436 residues long: Glutamate-1-semialdehyde 2,1-aminomutase (436 aa).

Residue lysine 274 is modified to N6-(pyridoxal phosphate)lysine.

This sequence belongs to the class-III pyridoxal-phosphate-dependent aminotransferase family. HemL subfamily. As to quaternary structure, homodimer. Requires pyridoxal 5'-phosphate as cofactor.

It is found in the cytoplasm. It carries out the reaction (S)-4-amino-5-oxopentanoate = 5-aminolevulinate. The protein operates within porphyrin-containing compound metabolism; protoporphyrin-IX biosynthesis; 5-aminolevulinate from L-glutamyl-tRNA(Glu): step 2/2. This chain is Glutamate-1-semialdehyde 2,1-aminomutase, found in Albidiferax ferrireducens (strain ATCC BAA-621 / DSM 15236 / T118) (Rhodoferax ferrireducens).